Here is an 818-residue protein sequence, read N- to C-terminus: Serine/threonine-protein phosphatase 4 regulatory subunit 3 (818 aa).

In terms of domain architecture, WH1 spans 1 to 100 (MTDTRRRVKV…DEIWEKICQV (100 aa)). The tract at residues 718 to 818 (LAKSSFSGRQ…PPSKKSRLSS (101 aa)) is disordered. Residues 721–730 (SSFSGRQNPS) are compositionally biased toward polar residues. A compositionally biased stretch (low complexity) spans 736–756 (SGSTKTSLSSPPPSASLSPGS). Positions 788-804 (YPDDDEEEEDDDDEESK) are enriched in acidic residues.

This sequence belongs to the SMEK family. Serine/threonine-protein phosphatase 4 (PP4) occurs in different assemblies of the catalytic and one or more regulatory subunits.

In terms of biological role, regulatory subunit of serine/threonine-protein phosphatase 4. The polypeptide is Serine/threonine-protein phosphatase 4 regulatory subunit 3 (smek1) (Tetraodon nigroviridis (Spotted green pufferfish)).